We begin with the raw amino-acid sequence, 273 residues long: Putative carboxypeptidase YodJ (273 aa).

An N-terminal signal peptide occupies residues M1 to G23. Residue C24 is the site of N-palmitoyl cysteine attachment. Residue C24 is the site of S-diacylglycerol cysteine attachment. A disordered region spans residues S27–N58. Basic and acidic residues predominate over residues A31 to K53.

This sequence belongs to the peptidase M15B family.

The protein localises to the cell membrane. In Bacillus subtilis (strain 168), this protein is Putative carboxypeptidase YodJ (yodJ).